The chain runs to 74 residues: Pelophylaxin-3 (74 aa).

An N-terminal signal peptide occupies residues 1-22; sequence MFTLKKSLLLVFFLGTISLSLC. Positions 23-39 are excised as a propeptide; that stretch reads EDERNADEDDGEMTEEV. Cysteine 68 and cysteine 74 form a disulfide bridge.

As to expression, expressed by the skin glands.

It is found in the secreted. In terms of biological role, antimicrobial peptide. In Pelophylax fukienensis (Fukien gold-striped pond frog), this protein is Pelophylaxin-3.